Here is a 601-residue protein sequence, read N- to C-terminus: MEATRTSFGLHNAPLCPTTNPSLFPRRWLHKHTLSLKPAKQHHLVCVRATESNDNLESSRPLAHFSPTLWGDHFLSVPLHVAEFDDFSREIEVTMKPKVRDMLKSSKNSDNERIRLIHLLMNLGIAYHFEIEIDEILGQAFGNLDDIIAKENDLETISTMFEVFRLRGYYMPCYAFNRFKGEDGRFKESLAEDIRGMLQLYEAAHLGTPSEDIMDEALSFTRYRLESLTSNHTATASPHLSKHIQNALYRARYHNLEILVAREYISFYEQEEDHDETLLKFAKLNFNYCQLHYIQELKDLTKWWKELDLASKLPYIRDRIVEVYFGALALYFEPRYSLGRIIVTKITMIVTVFNDTCDAYGTLPEVTSLVDSFQRWDLGDIEKLPSYVKIVFRGVFETLEEIEQEMRPQGRSRIVQVAVDEIKKLGKAYLAISKWARASHVPTFEEYMEFGMQTSMDHFAAYSFIAMEDCDENQTCEWYKSRPKMMEALNGVFRIKNDINTFEQEMSRGEVAKGLNCYMKQHGVSKEEAIGEMNKIYSNYYKIIMEEYLTTTAVPRPILVRCLNVSRPIHHFYKERDEFTDPYFGMLKEVITSLFIHPIPL.

Positions 354, 358, 497, 501, and 505 each coordinate Mg(2+). A DDXXD motif; degenerate motif is present at residues 354–358 (NDTCD).

Belongs to the terpene synthase family. Tpsa subfamily. Mg(2+) is required as a cofactor. Requires Mn(2+) as cofactor. Expressed exclusively in flowers.

It is found in the cytoplasm. Its pathway is secondary metabolite biosynthesis; terpenoid biosynthesis. The polypeptide is Terpenoid synthase 17 (TPS17) (Arabidopsis thaliana (Mouse-ear cress)).